Reading from the N-terminus, the 802-residue chain is E3 ubiquitin-protein ligase UHRF2 (802 aa).

A Ubiquitin-like domain is found at 1-78 (MWIQVRTIDG…IQLLVRPDPD (78 aa)). 2 disordered regions span residues 80-116 (LPGTSTQIEAKPCSNSPPKVKKAPRVGPSNQPSTSAR) and 153-197 (RASD…STSN). Composition is skewed to polar residues over residues 82 to 96 (GTSTQIEAKPCSNSP), 153 to 177 (RASDGQSRGKTPLKNGSSCKRTNGN), and 188 to 197 (KLDSVPSTSN). Residues 117-311 (ARLIDPGFGI…VDEIFKIERP (195 aa)) form a required for interaction with histone H3 region. Residues 194 to 288 (STSNSDCVAA…KELRVKIFLG (95 aa)) form an interaction with PCNP region. A PHD-type zinc finger spans residues 344 to 395 (SCSCRVCGGKHEPNMQLLCDECNVAYHIYCLNPPLDKVPEEEYWYCPSCKTD). The methyl-CpG binding and interaction with HDAC1 stretch occupies residues 414–644 (KMPSASTESR…LQYPAGYPSD (231 aa)). The region spanning 448–612 (GPIPGIPVGS…FLVWRYLLRR (165 aa)) is the YDG domain. The disordered stretch occupies residues 640–674 (GYPSDKEGKKPKGQSKKQPSGTTKRPISDDDCPSA). At serine 667 the chain carries Phosphoserine. The RING-type zinc finger occupies 733–772 (CVCCQELVYQPVTTECFHNVCKDCLQRSFKAQVFSCPACR).

Homodimer; disulfide-linked. Binds methylated CpG containing oligonucleotides. Interacts with H3; the interaction has a preference for the 'Lys-9' trimethylated form of H3 (H3K9me3). Interacts with PCNP. Interacts with HDAC1. Interacts directly with CCNE1; the interaction ubiquitinates CCNE1 and appears independent of CCNE1 phosphorylation. Interacts with CCND1; the interaction ubiquitinates CCND1 and appears independent of CCND1 phosphorylation. Interacts with p53/TP53 and RB1. Interacts with UBE2I. Interacts with ZNF618. Interacts with UHRF1. Interacts with FANCD2. Interacts with ATR. Interacts with PCNA. May be autoubiquitinated; which may lead to proteasomal degradation. In terms of processing, phosphorylated. Phosphorylation may be mediated by CDK2. Post-translationally, autosumoylated.

The protein resides in the nucleus. Its subcellular location is the chromosome. The enzyme catalyses S-ubiquitinyl-[E2 ubiquitin-conjugating enzyme]-L-cysteine + [acceptor protein]-L-lysine = [E2 ubiquitin-conjugating enzyme]-L-cysteine + N(6)-ubiquitinyl-[acceptor protein]-L-lysine.. It functions in the pathway protein modification; protein ubiquitination. Its activity is regulated as follows. E3 ligase activity is robustly activated by 5-hydroxymethylcytosine. Functionally, E3 ubiquitin ligase that plays important roles in DNA methylation, histone modifications, cell cycle and DNA repair. Acts as a specific reader for 5-hydroxymethylcytosine (5hmC) and thereby recruits various substrates to these sites to ubiquitinate them. This activity also allows the maintenance of 5mC levels at specific genomic loci and regulates neuron-related gene expression. Participates in cell cycle regulation by ubiquitinating cyclins CCND1 and CCNE1 and thereby inducing G1 arrest. Also ubiquitinates PCNP leading to its degradation by the proteasome. Plays an active role in DNA damage repair by ubiquitinating p21/CDKN1A leading to its proteasomal degradation. Also promotes DNA repair by acting as an interstrand cross-links (ICLs) sensor. Mechanistically, cooperates with UHRF1 to ensure recruitment of FANCD2 to ICLs, leading to FANCD2 monoubiquitination and subsequent activation. Contributes to UV-induced DNA damage response by physically interacting with ATR in response to irradiation, thereby promoting ATR activation. The polypeptide is E3 ubiquitin-protein ligase UHRF2 (UHRF2) (Homo sapiens (Human)).